Reading from the N-terminus, the 189-residue chain is Probable nicotinate-nucleotide adenylyltransferase (189 aa).

It belongs to the NadD family.

It catalyses the reaction nicotinate beta-D-ribonucleotide + ATP + H(+) = deamido-NAD(+) + diphosphate. It participates in cofactor biosynthesis; NAD(+) biosynthesis; deamido-NAD(+) from nicotinate D-ribonucleotide: step 1/1. In terms of biological role, catalyzes the reversible adenylation of nicotinate mononucleotide (NaMN) to nicotinic acid adenine dinucleotide (NaAD). This is Probable nicotinate-nucleotide adenylyltransferase from Bacillus cytotoxicus (strain DSM 22905 / CIP 110041 / 391-98 / NVH 391-98).